We begin with the raw amino-acid sequence, 49 residues long: Large ribosomal subunit protein bL33 (49 aa).

The protein belongs to the bacterial ribosomal protein bL33 family.

The protein is Large ribosomal subunit protein bL33 of Clostridium botulinum (strain Alaska E43 / Type E3).